The chain runs to 38 residues: Cytochrome b6-f complex subunit 5 (38 aa).

A helical membrane pass occupies residues 5-25 (LLLGIVLGLIPVTLAGLFVAA).

The protein belongs to the PetG family. The 4 large subunits of the cytochrome b6-f complex are cytochrome b6, subunit IV (17 kDa polypeptide, PetD), cytochrome f and the Rieske protein, while the 4 small subunits are PetG, PetL, PetM and PetN. The complex functions as a dimer.

Its subcellular location is the cellular thylakoid membrane. Functionally, component of the cytochrome b6-f complex, which mediates electron transfer between photosystem II (PSII) and photosystem I (PSI), cyclic electron flow around PSI, and state transitions. PetG is required for either the stability or assembly of the cytochrome b6-f complex. This is Cytochrome b6-f complex subunit 5 from Synechocystis sp. (strain ATCC 27184 / PCC 6803 / Kazusa).